A 1050-amino-acid chain; its full sequence is uncharacterized protein (1050 aa).

Coiled-coil stretches lie at residues 1–420, 463–627, and 692–981; these read MEKV…TAKM, YSLL…IREL, and NDSK…NLLS.

This is an uncharacterized protein from Arabidopsis thaliana (Mouse-ear cress).